The primary structure comprises 526 residues: NAD(P)H-quinone oxidoreductase chain 4 1 (526 aa).

The next 14 membrane-spanning stretches (helical) occupy residues 7 to 27 (FPWL…IPLL), 35 to 55 (WYAL…FGWH), 86 to 106 (LSFP…VAAW), 114 to 134 (LFFF…LAQD), 135 to 155 (LLLF…LIAI), 168 to 188 (FILY…AMAF), 208 to 228 (ALQI…LPVF), 242 to 262 (SAPI…YGLI), 276 to 296 (FAPV…LAAL), 310 to 330 (IAHM…GLNG), 331 to 351 (ALLQ…LTGI), 374 to 396 (AFAL…GFVG), 417 to 437 (GIAL…LSML), and 463 to 483 (MAVA…PRLA).

This sequence belongs to the complex I subunit 4 family.

It is found in the cellular thylakoid membrane. It carries out the reaction a plastoquinone + NADH + (n+1) H(+)(in) = a plastoquinol + NAD(+) + n H(+)(out). The catalysed reaction is a plastoquinone + NADPH + (n+1) H(+)(in) = a plastoquinol + NADP(+) + n H(+)(out). In terms of biological role, NDH-1 shuttles electrons from NAD(P)H, via FMN and iron-sulfur (Fe-S) centers, to quinones in the respiratory chain. The immediate electron acceptor for the enzyme in this species is believed to be plastoquinone. Couples the redox reaction to proton translocation (for every two electrons transferred, four hydrogen ions are translocated across the cytoplasmic membrane), and thus conserves the redox energy in a proton gradient. The sequence is that of NAD(P)H-quinone oxidoreductase chain 4 1 from Synechococcus sp. (strain JA-3-3Ab) (Cyanobacteria bacterium Yellowstone A-Prime).